We begin with the raw amino-acid sequence, 150 residues long: MVLCFPLLLLVLVLWGQVCPLHAIPKHLTKAHWFEIQHIRPSPLQCNRAMSGINNYTQHCKPQNTFLHDSFQNVAAVCDLLSITCKNGWHNCHQSLKPVNMTDCRLTSGKYPQCRYSAAAQYKLFIVACDPPQKSDPPYKLVPVHLDSIL.

Positions 1-23 (MVLCFPLLLLVLVLWGQVCPLHA) are cleaved as a signal peptide. Catalysis depends on His38, which acts as the Proton acceptor. 4 disulfide bridges follow: Cys46-Cys104, Cys60-Cys114, Cys78-Cys129, and Cys85-Cys92. A glycan (N-linked (GlcNAc...) asparagine) is linked at Asn55. Substrate contacts are provided by residues 61 to 65 (KPQNT) and Lys86. A glycan (N-linked (GlcNAc...) asparagine) is linked at Asn100. Arg105 is a substrate binding site. His145 acts as the Proton donor in catalysis.

The protein belongs to the pancreatic ribonuclease family. As to quaternary structure, interacts (via N-terminus) with bacterial lipopolysaccharide (LPS).

The protein resides in the secreted. It localises to the lysosome. It is found in the cytoplasmic granule. Functionally, ribonuclease which shows a preference for the pyrimidines uridine and cytosine. Has potent antibacterial activity against a range of Gram-positive and Gram-negative bacteria, including P.aeruginosa, A.baumanii, M.luteus, S.aureus, E.faecalis, E.faecium, S.saprophyticus and E.coli. Causes loss of bacterial membrane integrity, and also promotes agglutination of Gram-negative bacteria. Probably contributes to urinary tract sterility. Bactericidal activity is independent of RNase activity. The chain is Ribonuclease K6 (RNASE6) from Aotus trivirgatus (Three-striped night monkey).